Reading from the N-terminus, the 100-residue chain is NADH-quinone oxidoreductase subunit K (100 aa).

3 consecutive transmembrane segments (helical) span residues 4–24 (LQHG…GLII), 28–48 (LLFM…AFVV), and 60–80 (VMYI…LALL).

This sequence belongs to the complex I subunit 4L family. As to quaternary structure, NDH-1 is composed of 13 different subunits. Subunits NuoA, H, J, K, L, M, N constitute the membrane sector of the complex.

It localises to the cell inner membrane. The enzyme catalyses a quinone + NADH + 5 H(+)(in) = a quinol + NAD(+) + 4 H(+)(out). Its function is as follows. NDH-1 shuttles electrons from NADH, via FMN and iron-sulfur (Fe-S) centers, to quinones in the respiratory chain. The immediate electron acceptor for the enzyme in this species is believed to be ubiquinone. Couples the redox reaction to proton translocation (for every two electrons transferred, four hydrogen ions are translocated across the cytoplasmic membrane), and thus conserves the redox energy in a proton gradient. The protein is NADH-quinone oxidoreductase subunit K of Yersinia enterocolitica serotype O:8 / biotype 1B (strain NCTC 13174 / 8081).